We begin with the raw amino-acid sequence, 186 residues long: Sec-independent protein translocase protein TatB (186 aa).

Residues 1–21 traverse the membrane as a helical segment; sequence MFDIGFSELILLMVLGLVVLG. Residues 162 to 186 are disordered; that stretch reads LSSYYPPDDIEIAPASKSQSSKTKS. Residues 177-186 show a composition bias toward polar residues; that stretch reads SKSQSSKTKS.

Belongs to the TatB family. As to quaternary structure, the Tat system comprises two distinct complexes: a TatABC complex, containing multiple copies of TatA, TatB and TatC subunits, and a separate TatA complex, containing only TatA subunits. Substrates initially bind to the TatABC complex, which probably triggers association of the separate TatA complex to form the active translocon.

It localises to the cell inner membrane. Its function is as follows. Part of the twin-arginine translocation (Tat) system that transports large folded proteins containing a characteristic twin-arginine motif in their signal peptide across membranes. Together with TatC, TatB is part of a receptor directly interacting with Tat signal peptides. TatB may form an oligomeric binding site that transiently accommodates folded Tat precursor proteins before their translocation. This is Sec-independent protein translocase protein TatB from Haemophilus influenzae (strain 86-028NP).